A 471-amino-acid chain; its full sequence is MSRSLLVENSRTINSNEEKGVNESQYILQKRNVPRTILGNVTNNANILQEISMNRKIGMKNFSKLNNFFPLKDDVSRADDFTSSFNDSRQGVKQEVLNNKENIPEYGYSEQEKQQCSNDDSFHTNSTALSCNRLIYSENKSISTQMEWQKKIMREDSKKKRPISTLVEQDDQKKFKLHELTTEEEVLEEYEWDDLDEEDCDDPLMVSEEVNDIFDYLHHLEIITLPNKANLYKHKNIKQNRDILVNWIIKIHNKFGLLPETLYLAINIMDRFLCEEVVQLNRLQLVGTSCLFIASKYEEIYSPSIKHFAYETDGACSVEDIKEGERFILEKLDFQISFANPMNFLRRISKADDYDIQSRTLAKFLMEISIVDFKFIGILPSLCASAAMFLSRKMLGKGTWDGNLIHYSGGYTKAKLYPVCQLLMDYLVGSTIHDEFLKKYQSRRFLKASIISIEWALKVRKNGYDIMTLHE.

It belongs to the cyclin family. Cyclin AB subfamily.

In terms of biological role, essential for the control of the cell cycle at the G2/M (mitosis) transition. Interacts with the CDC2 protein kinase to form MPF. G2/M cyclins accumulate steadily during G2 and are abruptly destroyed at mitosis. This is G2/mitotic-specific cyclin-1 (CLB1) from Saccharomyces cerevisiae (strain ATCC 204508 / S288c) (Baker's yeast).